Here is a 471-residue protein sequence, read N- to C-terminus: Paraneoplastic antigen-like protein 8A (471 aa).

2 disordered regions span residues 188–300 (SAAG…EGSA) and 321–471 (ASRG…PSAV). Positions 238-247 (HSRRKRQKKT) are enriched in basic residues. Low complexity predominate over residues 256-269 (KKSQGSHSHSSASL). Residues 270-287 (KHPEADDGKNRERLEHVR) are compositionally biased toward basic and acidic residues.

Belongs to the PNMA family.

The protein is Paraneoplastic antigen-like protein 8A (PNMA8A) of Bos taurus (Bovine).